We begin with the raw amino-acid sequence, 124 residues long: Small ribosomal subunit protein uS12 (124 aa).

The residue at position 89 (D89) is a 3-methylthioaspartic acid. Residues 104-124 (SAGVQNRNRGRSKYGTKRPKK) form a disordered region. Residues 111–124 (NRGRSKYGTKRPKK) are compositionally biased toward basic residues.

This sequence belongs to the universal ribosomal protein uS12 family. As to quaternary structure, part of the 30S ribosomal subunit. Contacts proteins S8 and S17. May interact with IF1 in the 30S initiation complex.

Its function is as follows. With S4 and S5 plays an important role in translational accuracy. Interacts with and stabilizes bases of the 16S rRNA that are involved in tRNA selection in the A site and with the mRNA backbone. Located at the interface of the 30S and 50S subunits, it traverses the body of the 30S subunit contacting proteins on the other side and probably holding the rRNA structure together. The combined cluster of proteins S8, S12 and S17 appears to hold together the shoulder and platform of the 30S subunit. This chain is Small ribosomal subunit protein uS12, found in Pelotomaculum thermopropionicum (strain DSM 13744 / JCM 10971 / SI).